The sequence spans 1363 residues: DNA-directed RNA polymerase subunit beta (1363 aa).

The protein belongs to the RNA polymerase beta chain family. The RNAP catalytic core consists of 2 alpha, 1 beta, 1 beta' and 1 omega subunit. When a sigma factor is associated with the core the holoenzyme is formed, which can initiate transcription.

The catalysed reaction is RNA(n) + a ribonucleoside 5'-triphosphate = RNA(n+1) + diphosphate. Its function is as follows. DNA-dependent RNA polymerase catalyzes the transcription of DNA into RNA using the four ribonucleoside triphosphates as substrates. This is DNA-directed RNA polymerase subunit beta from Syntrophus aciditrophicus (strain SB).